The chain runs to 294 residues: Bifunctional protein FolD (294 aa).

NADP(+) is bound by residues 169–171 (GRG), T196, and V237.

This sequence belongs to the tetrahydrofolate dehydrogenase/cyclohydrolase family. As to quaternary structure, homodimer.

It carries out the reaction (6R)-5,10-methylene-5,6,7,8-tetrahydrofolate + NADP(+) = (6R)-5,10-methenyltetrahydrofolate + NADPH. It catalyses the reaction (6R)-5,10-methenyltetrahydrofolate + H2O = (6R)-10-formyltetrahydrofolate + H(+). Its pathway is one-carbon metabolism; tetrahydrofolate interconversion. In terms of biological role, catalyzes the oxidation of 5,10-methylenetetrahydrofolate to 5,10-methenyltetrahydrofolate and then the hydrolysis of 5,10-methenyltetrahydrofolate to 10-formyltetrahydrofolate. The protein is Bifunctional protein FolD of Renibacterium salmoninarum (strain ATCC 33209 / DSM 20767 / JCM 11484 / NBRC 15589 / NCIMB 2235).